Here is a 263-residue protein sequence, read N- to C-terminus: 2-dehydro-3-deoxyphosphooctonate aldolase (263 aa).

It belongs to the KdsA family.

It is found in the cytoplasm. The catalysed reaction is D-arabinose 5-phosphate + phosphoenolpyruvate + H2O = 3-deoxy-alpha-D-manno-2-octulosonate-8-phosphate + phosphate. It participates in carbohydrate biosynthesis; 3-deoxy-D-manno-octulosonate biosynthesis; 3-deoxy-D-manno-octulosonate from D-ribulose 5-phosphate: step 2/3. The protein operates within bacterial outer membrane biogenesis; lipopolysaccharide biosynthesis. The sequence is that of 2-dehydro-3-deoxyphosphooctonate aldolase from Wolinella succinogenes (strain ATCC 29543 / DSM 1740 / CCUG 13145 / JCM 31913 / LMG 7466 / NCTC 11488 / FDC 602W) (Vibrio succinogenes).